The sequence spans 240 residues: Transcriptional regulatory protein rxt2 (240 aa).

It belongs to the RXT2 family. Component of the RPD3C(L) complex.

The protein resides in the nucleus. Functionally, component of the RPD3C(L) histone deacetylase complex (HDAC) responsible for the deacetylation of lysine residues on the N-terminal part of the core histones (H2A, H2B, H3 and H4). Histone deacetylation gives a tag for epigenetic repression and plays an important role in transcriptional regulation, cell cycle progression and developmental events. The polypeptide is Transcriptional regulatory protein rxt2 (rtx2) (Schizosaccharomyces pombe (strain 972 / ATCC 24843) (Fission yeast)).